The following is a 351-amino-acid chain: 3-dehydroquinate synthase (351 aa).

NAD(+) contacts are provided by residues threonine 126–threonine 127, lysine 138, and lysine 147. Zn(2+) is bound by residues glutamate 180, histidine 244, and histidine 260.

It belongs to the sugar phosphate cyclases superfamily. Dehydroquinate synthase family. Co(2+) is required as a cofactor. It depends on Zn(2+) as a cofactor. Requires NAD(+) as cofactor.

It is found in the cytoplasm. The enzyme catalyses 7-phospho-2-dehydro-3-deoxy-D-arabino-heptonate = 3-dehydroquinate + phosphate. It participates in metabolic intermediate biosynthesis; chorismate biosynthesis; chorismate from D-erythrose 4-phosphate and phosphoenolpyruvate: step 2/7. In terms of biological role, catalyzes the conversion of 3-deoxy-D-arabino-heptulosonate 7-phosphate (DAHP) to dehydroquinate (DHQ). The sequence is that of 3-dehydroquinate synthase from Exiguobacterium sp. (strain ATCC BAA-1283 / AT1b).